We begin with the raw amino-acid sequence, 352 residues long: tRNA N6-adenosine threonylcarbamoyltransferase (352 aa).

H117 and H121 together coordinate Fe cation. Substrate contacts are provided by residues 140–144 (LVSGG), D173, G186, and N287. Residue D315 coordinates Fe cation.

Belongs to the KAE1 / TsaD family. It depends on Fe(2+) as a cofactor.

The protein resides in the cytoplasm. The enzyme catalyses L-threonylcarbamoyladenylate + adenosine(37) in tRNA = N(6)-L-threonylcarbamoyladenosine(37) in tRNA + AMP + H(+). Functionally, required for the formation of a threonylcarbamoyl group on adenosine at position 37 (t(6)A37) in tRNAs that read codons beginning with adenine. Is involved in the transfer of the threonylcarbamoyl moiety of threonylcarbamoyl-AMP (TC-AMP) to the N6 group of A37, together with TsaE and TsaB. TsaD likely plays a direct catalytic role in this reaction. The sequence is that of tRNA N6-adenosine threonylcarbamoyltransferase from Psychrobacter cryohalolentis (strain ATCC BAA-1226 / DSM 17306 / VKM B-2378 / K5).